Here is a 661-residue protein sequence, read N- to C-terminus: Probable urea active transporter 3 (661 aa).

15 helical membrane passes run 13 to 33, 56 to 76, 86 to 106, 132 to 152, 165 to 185, 197 to 217, 251 to 271, 288 to 308, 352 to 372, 397 to 417, 419 to 439, 454 to 474, 495 to 515, 556 to 576, and 591 to 611; these read GIVI…TYVL, GLIS…LTSA, GSMW…VIAL, AVFL…LLLG, VVAA…SGGL, VIVY…SVHI, AVFV…CDPS, YFAG…AAAL, AGVL…LVAF, VTHV…VLFN, IGIT…PAVF, GMII…VGSC, VGNF…SYFF, IGIF…PLPM, and WIIV…FYPL.

It belongs to the sodium:solute symporter (SSF) (TC 2.A.21) family.

The protein localises to the membrane. It localises to the golgi apparatus membrane. In terms of biological role, involved in active transport of urea. This is Probable urea active transporter 3 (dur3-3) from Schizosaccharomyces pombe (strain 972 / ATCC 24843) (Fission yeast).